An 839-amino-acid chain; its full sequence is Oxidation resistance protein 1 (839 aa).

Residues 38-91 (DYLREPAPGDPGCGPGELRPPSPTSPEGPDTGQKKTLDKKDGRRMSFQKPKGTI) form a disordered region. Basic and acidic residues predominate over residues 69 to 81 (GQKKTLDKKDGRR). A Phosphoserine modification is found at serine 83. The LysM domain occupies 91-134 (IEYTVESRDSLNSIALKFDTTPNELVQLNKLFSRAVVTGQVLYV). Phosphothreonine is present on threonine 111. Residues 140–161 (VSSVESSPSLSPVSPLSPTSSE) are compositionally biased toward low complexity. Residues 140 to 195 (VSSVESSPSLSPVSPLSPTSSEAEFDKTTTPDVVHPKEAPPSSTESSIRPARVVSS) are disordered. Basic and acidic residues predominate over residues 163 to 177 (EFDKTTTPDVVHPKE). Residues serine 194, serine 195, and serine 197 each carry the phosphoserine modification. The 56-residue stretch at 206-261 (KFLKINCKYITNGKGTVSGVLLVTPNNIMFDPHKTDPLVQENGCEEYGIMCPMEEV) folds into the GRAM domain. Residues serine 287, serine 327, and serine 329 each carry the phosphoserine modification. Disordered stretches follow at residues 292–401 (CHSK…VGAL) and 415–540 (KEGD…SLLK). Threonine 334 bears the Phosphothreonine mark. Position 339 is a phosphoserine (serine 339). A compositionally biased stretch (basic and acidic residues) spans 340–356 (PIREELPSSELRQEKSS). Composition is skewed to polar residues over residues 357–378 (DASSESVQTVSQIEVESLTAAS) and 387–397 (TNANSGRSSSE). 2 stretches are compositionally biased toward basic and acidic residues: residues 433–450 (QSTDIKGQDNQDSFHHEN) and 469–497 (LTEKPTVLKDQQGKELKRDSETEVEELRK). Serine 488 bears the Phosphoserine mark. The span at 502 to 519 (HSMQQAKQQRDTIQQVAQ) shows a compositional bias: polar residues. Residues 543–570 (RRHRLHKFLCLRVGKPMRKTFVSQASAT) are mediates oxidative antimutator activity. A disordered region spans residues 648–677 (TREDINSKQAAPAKADLEPESFRPNLSDPS). The TLDc domain maps to 678–839 (ELLLPDQIEK…IQDIEIWAFE (162 aa)).

This sequence belongs to the OXR1 family.

It is found in the mitochondrion. Its function is as follows. May be involved in protection from oxidative damage. The polypeptide is Oxidation resistance protein 1 (Oxr1) (Rattus norvegicus (Rat)).